Reading from the N-terminus, the 499-residue chain is MTVATGDPADEAAALPGHPQDTYDPEADHECCERVVINISGLRFETQLKTLAQFPETLLGDPKKRMRYFDPLRNEYFFDRNRPSFDAILYYYQSGGRLRRPVNVPLDIFSEEIRFYELGEEAMEMFREDEGYIKEEERPLPENEFQRQVWLLFEYPESSGPARIIAIVSVMVILISIVSFCLETLPIFRDENEDMHGSGVTFHTYSNSTIGYQQSTSFTDPFFIVETLCIIWFSFEFLVRFFACPSKAGFFTNIMNIIDIVAIIPYFITLGTELAEKPEDAQQGQQAMSLAILRVIRLVRVFRIFKLSRHSKGLQILGQTLKASMRELGLLIFFLFIGVILFSSAVYFAEADERESQFPSIPDAFWWAVVSMTTVGYGDMVPTTIGGKIVGSLCAIAGVLTIALPVPVIVSNFNYFYHRETEGEEQAQYLQVTSCPKIPSSPDLKKSRSASTISKSDYMEIQEGVNNSNEDFREENLKTANCTLANTNYVNITKMLTDV.

Residues 1 to 26 (MTVATGDPADEAAALPGHPQDTYDPE) form a disordered region. A tetramerization domain region spans residues 1-125 (MTVATGDPAD…YELGEEAMEM (125 aa)). The Cytoplasmic segment spans residues 1–160 (MTVATGDPAD…LLFEYPESSG (160 aa)). Residues 161–182 (PARIIAIVSVMVILISIVSFCL) traverse the membrane as a helical segment. Residues 183–221 (ETLPIFRDENEDMHGSGVTFHTYSNSTIGYQQSTSFTDP) lie on the Extracellular side of the membrane. N-linked (GlcNAc...) asparagine glycosylation is present at Asn-207. The chain crosses the membrane as a helical span at residues 222–243 (FFIVETLCIIWFSFEFLVRFFA). Cys-244 carries S-palmitoyl cysteine lipidation. Residues 244–254 (CPSKAGFFTNI) lie on the Cytoplasmic side of the membrane. The helical transmembrane segment at 255–275 (MNIIDIVAIIPYFITLGTELA) threads the bilayer. Topologically, residues 276–289 (EKPEDAQQGQQAMS) are extracellular. The helical; Voltage-sensor transmembrane segment at 290–310 (LAILRVIRLVRVFRIFKLSRH) threads the bilayer. At 311–325 (SKGLQILGQTLKASM) the chain is on the cytoplasmic side. The S4-S5 linker stretch occupies residues 312–325 (KGLQILGQTLKASM). A helical transmembrane segment spans residues 326–347 (RELGLLIFFLFIGVILFSSAVY). At 348-361 (FAEADERESQFPSI) the chain is on the extracellular side. Positions 362–373 (PDAFWWAVVSMT) form an intramembrane region, helical. The short motif at 374–379 (TVGYGD) is the Selectivity filter element. Residues 374-381 (TVGYGDMV) lie within the membrane without spanning it. At 382 to 388 (PTTIGGK) the chain is on the extracellular side. Residues 389 to 417 (IVGSLCAIAGVLTIALPVPVIVSNFNYFY) traverse the membrane as a helical segment. Residues 418–499 (HRETEGEEQA…VNITKMLTDV (82 aa)) lie on the Cytoplasmic side of the membrane. Position 429 is a phosphotyrosine (Tyr-429). Residues Ser-434, Ser-440, Ser-441, and Ser-449 each carry the phosphoserine modification. Phosphotyrosine is present on Tyr-458. The residue at position 468 (Ser-468) is a Phosphoserine. Positions 497–499 (TDV) match the PDZ-binding motif.

It belongs to the potassium channel family. A (Shaker) (TC 1.A.1.2) subfamily. Kv1.2/KCNA2 sub-subfamily. In terms of assembly, homotetramer and heterotetramer with other channel-forming alpha subunits, such as KCNA1, KCNA4, KCNA5, KCNA6 and KCNA7. Channel activity is regulated by interaction with the beta subunits, including KCNAB1 and KCNAB2. Identified in a complex with KCNA1 and KCNAB2. Identified in a complex with KCNA5 and KCNAB1. Identified in a complex with KCNA4 and FYN. Interacts with the beta subunit KCNAB1. Interacts with PTK2B. Interacts (via C-terminus) with CTTN. Interacts (via N-terminal cytoplasmic domain) with RHOA (GTP-bound form); this regulates channel activity by reducing location at the cell surface in response to CHRM1 activation. Interacts with DRD2. Interacts with SIGMAR1; cocaine consumption leads to increased interaction. Interacts with ADAM22. Interacts (via C-terminus) with the PDZ domains of DLG1, DLG2 and DLG4. Interacts with CNTNAP2. Interacts with ADAM11. Interacts with LYNX1. Phosphorylated on tyrosine residues; phosphorylation increases in response to ischemia. Phosphorylated on tyrosine residues by activated PTK2B/PYK2. Phosphorylation on tyrosine residues suppresses ion channel activity. Phosphorylated on tyrosine residues in response to CHRM1 activation; this abolishes interaction with CTTN. This is probably due to endocytosis of the phosphorylated channel subunits. Phosphorylated on serine residues in response to increased cAMP levels; phosphorylation is apparently not catalyzed by PKA. Post-translationally, N-glycosylated, with complex, sialylated N-glycans. In terms of tissue distribution, detected in brain cortex. Detected in peroneal nerve in the juxtaparanodal regions of the node of Ranvier; expression is decreased in patients with diabetes mellitus that suffer from axonal neuropathy. Detected in paranodal and juxtanodal zones in myelinated spinal cord (at protein level).

The protein resides in the cell membrane. It is found in the membrane. The protein localises to the cell projection. Its subcellular location is the axon. It localises to the synapse. The protein resides in the endoplasmic reticulum membrane. It is found in the lamellipodium membrane. The protein localises to the synaptosome. Its subcellular location is the presynaptic cell membrane. It localises to the dendrite. The protein resides in the cell junction. It is found in the paranodal septate junction. The enzyme catalyses K(+)(in) = K(+)(out). With respect to regulation, inhibited by 4-aminopyridine (4-AP) and charybdotoxin (CTX), but not by tetraethylammonium (TEA). Inhibited by dendrotoxin (DTX). Inhibited by tityustoxin-K alpha (TsTX-Kalpha), a toxin that is highly specific for KCNA2. Inhibited by maurotoxin. Inhibited by kappaM conotoxins kappaM-RIIIJ and kappaM-RIIIK; kappaM-RIIIJ has much higher affinity for channels containing KCNA2 than kappaM-RIIIK, with the exception of heterodimers formed by KCNA2 and KCNA7 where the opposite is true. Functionally, voltage-gated potassium channel that mediates transmembrane potassium transport in excitable membranes, primarily in the brain and the central nervous system, but also in the cardiovascular system. Prevents aberrant action potential firing and regulates neuronal output. Forms tetrameric potassium-selective channels through which potassium ions pass in accordance with their electrochemical gradient. The channel alternates between opened and closed conformations in response to the voltage difference across the membrane. Can form functional homotetrameric channels and heterotetrameric channels that contain variable proportions of KCNA1, KCNA2, KCNA4, KCNA5, KCNA6, KCNA7, and possibly other family members as well; channel properties depend on the type of alpha subunits that are part of the channel. Channel properties are modulated by cytoplasmic beta subunits that regulate the subcellular location of the alpha subunits and promote rapid inactivation of delayed rectifier potassium channels. In vivo, membranes probably contain a mixture of heteromeric potassium channel complexes, making it difficult to assign currents observed in intact tissues to any particular potassium channel family member. Homotetrameric KCNA2 forms a delayed-rectifier potassium channel that opens in response to membrane depolarization, followed by slow spontaneous channel closure. In contrast, a heteromultimer formed by KCNA2 and KCNA4 shows rapid inactivation. Regulates neuronal excitability and plays a role as pacemaker in the regulation of neuronal action potentials. KCNA2-containing channels play a presynaptic role and prevent hyperexcitability and aberrant action potential firing. Response to toxins that are selective for KCNA2-containing potassium channels suggests that in Purkinje cells, dendritic subthreshold KCNA2-containing potassium channels prevent random spontaneous calcium spikes, suppressing dendritic hyperexcitability without hindering the generation of somatic action potentials, and thereby play an important role in motor coordination. Plays a role in the induction of long-term potentiation of neuron excitability in the CA3 layer of the hippocampus. May function as down-stream effector for G protein-coupled receptors and inhibit GABAergic inputs to basolateral amygdala neurons. May contribute to the regulation of neurotransmitter release, such as gamma-aminobutyric acid (GABA). Contributes to the regulation of the axonal release of the neurotransmitter dopamine. Reduced KCNA2 expression plays a role in the perception of neuropathic pain after peripheral nerve injury, but not acute pain. Plays a role in the regulation of the time spent in non-rapid eye movement (NREM) sleep. This is Potassium voltage-gated channel subfamily A member 2 (KCNA2) from Homo sapiens (Human).